A 517-amino-acid polypeptide reads, in one-letter code: Cytochrome P450 CYP72A616 (517 aa).

The chain crosses the membrane as a helical span at residues 5-25 (VLGALAALLAAAAAWVMRAAA). Residue Cys465 participates in heme binding.

The protein belongs to the cytochrome P450 family. In terms of tissue distribution, mainly expressed in leaves and, at low levels, in roots, fruits and stems.

It localises to the membrane. The protein operates within steroid metabolism; cholesterol metabolism. Its function is as follows. Involved in the biosynthesis of spiroketal steroid and saponin natural products from cholesterol such as diosgenin and analogs (e.g. furostanol and spirostanol), plant defense compounds used as main precursors for the industrial production of steroid hormones. During the 5,6-spiroketalization of cholesterol, may catalyze the 27-monohydroxylation of furostanol-type steroid to an intermediate product that undergoes a stereospecific formation of the terminal heterocycle to yield diosgenin. The chain is Cytochrome P450 CYP72A616 from Paris polyphylla (Daiswa polyphylla).